Here is a 166-residue protein sequence, read N- to C-terminus: QTSPMERFIVNLLDSTFDDRSSRPLHSVAPYWLHQPELNECNIGNSLGEVINEKDKFAVRADVSHFHPKELSVSVRDRELVIEGHHEERTDPAGHGSIERHFIRKYVLPEEVQPDTIESHLSDKGVLTISANKTAIGTTASRNIPIRASPKEPEANQKSAINDAKQ.

Residues 38-149 (LNECNIGNSL…ASRNIPIRAS (112 aa)) enclose the sHSP domain. The interval 140–166 (ASRNIPIRASPKEPEANQKSAINDAKQ) is disordered.

The protein belongs to the small heat shock protein (HSP20) family.

This is Small heat shock protein OV25-2 (OV25-2) from Onchocerca volvulus.